Consider the following 469-residue polypeptide: MPREIITIQVGQCGNQIGMEFWKQLCLEHGIGKDGLLEDFATQGGDRKDVFFYQADDQHYIPRALLVDLEPRVINGIQNSEYRNLYNHENIFVAEHGGGAGNNWASGYHQGEQVVDDIMDMIDREADGSDSLEGFVLCHSIAGGTGSGMGSYLLETLNDRYSKKLVQTYSVFPNQMETSDVVVQPYNSLLTLKRLTLNADCVVVLDNTALNRIAVERLHLANPTFAQTNSLVSTVMSASTTTLRYPGYMNNDLVGLLASLIPTPRCHFLMTGYTPLTVERQVNMIRKTTVLDVMRRLLQTKNIMVSSYARNKEASQAKYISILNIIQGEVDPTQVHESLQRIRERKLVNFIEWGPASIQVALSRKSPYVQTTHRVSGLMLANHTSIRHLFSKCLGQYEKLRKKQAFLDNYRKFPMFEDNDLSEFDESREIIESLVDEYKACESPDYIKWGMEDAGEANVAAALDSKLVV.

142 to 148 serves as a coordination point for GTP; the sequence is AGGTGSG.

Belongs to the tubulin family.

The protein resides in the cytoplasm. Its subcellular location is the cytoskeleton. It is found in the microtubule organizing center. Tubulin is the major constituent of microtubules. The gamma chain is found at microtubule organizing centers (MTOC) such as the spindle poles, suggesting that it is involved in the minus-end nucleation of microtubule assembly. This is Tubulin gamma-2 chain (TUBG2) from Oryza sativa subsp. japonica (Rice).